Consider the following 631-residue polypeptide: tRNA uridine 5-carboxymethylaminomethyl modification enzyme MnmG (631 aa).

FAD contacts are provided by residues Gly15–Gly20, Val127, and Ser182. Gly275–Phe289 is an NAD(+) binding site. Position 372 (Gln372) interacts with FAD.

This sequence belongs to the MnmG family. Homodimer. Heterotetramer of two MnmE and two MnmG subunits. Requires FAD as cofactor.

The protein resides in the cytoplasm. NAD-binding protein involved in the addition of a carboxymethylaminomethyl (cmnm) group at the wobble position (U34) of certain tRNAs, forming tRNA-cmnm(5)s(2)U34. This chain is tRNA uridine 5-carboxymethylaminomethyl modification enzyme MnmG, found in Buchnera aphidicola subsp. Schizaphis graminum (strain Sg).